The sequence spans 206 residues: Peptidyl-tRNA hydrolase (206 aa).

Position 19 (tyrosine 19) interacts with tRNA. Residue histidine 24 is the Proton acceptor of the active site. Tyrosine 70, asparagine 72, and asparagine 118 together coordinate tRNA.

The protein belongs to the PTH family. In terms of assembly, monomer.

The protein resides in the cytoplasm. The catalysed reaction is an N-acyl-L-alpha-aminoacyl-tRNA + H2O = an N-acyl-L-amino acid + a tRNA + H(+). Hydrolyzes ribosome-free peptidyl-tRNAs (with 1 or more amino acids incorporated), which drop off the ribosome during protein synthesis, or as a result of ribosome stalling. Its function is as follows. Catalyzes the release of premature peptidyl moieties from peptidyl-tRNA molecules trapped in stalled 50S ribosomal subunits, and thus maintains levels of free tRNAs and 50S ribosomes. The sequence is that of Peptidyl-tRNA hydrolase from Prochlorococcus marinus (strain MIT 9303).